A 346-amino-acid polypeptide reads, in one-letter code: Annexin A1 (346 aa).

Ala-2 carries the post-translational modification N-acetylalanine. Residue Ser-5 is modified to Phosphoserine; by TRPM7. Gln-19 participates in a covalent cross-link: Isoglutamyl lysine isopeptide (Gln-Lys) (interchain with K-?). At Tyr-21 the chain carries Phosphotyrosine; by EGFR. Residues Ser-34 and Ser-37 each carry the phosphoserine modification. A Phosphothreonine modification is found at Thr-41. Annexin repeat units lie at residues 42–113 (FNPS…ALLK), 114–185 (TPAQ…SLAK), 197–269 (DLAD…VIVK), and 273–344 (SQPM…ALCG). The residue at position 58 (Lys-58) is an N6-acetyllysine. Ca(2+) is bound by residues Gly-59, Val-60, Glu-62, Lys-97, Leu-100, Glu-105, Met-127, Gly-129, Gly-131, Thr-132, and Glu-134. Thr-136 carries the phosphothreonine modification. Asp-171, Gly-210, and Arg-213 together coordinate Ca(2+). Lys-214 is covalently cross-linked (Glycyl lysine isopeptide (Lys-Gly) (interchain with G-Cter in SUMO1); alternate). Lys-214 participates in a covalent cross-link: Glycyl lysine isopeptide (Lys-Gly) (interchain with G-Cter in SUMO2); alternate. Gly-215 provides a ligand contact to Ca(2+). Position 239 is an N6-acetyllysine (Lys-239). 3 residues coordinate Ca(2+): Asp-253, Glu-255, and Leu-256. Lys-257 participates in a covalent cross-link: Glycyl lysine isopeptide (Lys-Gly) (interchain with G-Cter in SUMO1). Residues Glu-261, Met-286, Gly-288, and Gly-290 each coordinate Ca(2+). At Lys-312 the chain carries N6-acetyllysine. Cys-324 and Cys-343 form a disulfide bridge. The Ca(2+) site is built by Leu-328, Glu-330, and Thr-331. Residue Lys-332 forms a Glycyl lysine isopeptide (Lys-Gly) (interchain with G-Cter in SUMO1) linkage. Glu-336 lines the Ca(2+) pocket.

This sequence belongs to the annexin family. As to quaternary structure, homodimer; non-covalently linked. Homodimer; linked by transglutamylation. Homodimers linked by transglutamylation are observed in placenta, but not in other tissues. Interacts with S100A11. Heterotetramer, formed by two molecules each of S100A11 and ANXA1. Interacts with DYSF. Interacts with EGFR. In terms of processing, phosphorylated by protein kinase C, EGFR and TRPM7. Phosphorylated in response to EGF treatment. Sumoylated. Post-translationally, proteolytically cleaved by cathepsin CTSG to release the active N-terminal peptide Ac2-26. As to expression, detected on surface epithelia and mucosal glands in nasal cavity, trachea, bronchi and bronchioles. Detected in blood vessel endothelial cells. Detected in neutrophils (at protein level).

It is found in the nucleus. It localises to the cytoplasm. Its subcellular location is the cell projection. The protein localises to the cilium. The protein resides in the basolateral cell membrane. It is found in the lateral cell membrane. It localises to the cell membrane. Its subcellular location is the apical cell membrane. The protein localises to the membrane. The protein resides in the endosome membrane. It is found in the secreted. It localises to the extracellular space. Its subcellular location is the early endosome. The protein localises to the cytoplasmic vesicle membrane. The protein resides in the extracellular exosome. It is found in the cytoplasmic vesicle. It localises to the secretory vesicle lumen. Its subcellular location is the phagocytic cup. Functionally, plays important roles in the innate immune response as effector of glucocorticoid-mediated responses and regulator of the inflammatory process. Has anti-inflammatory activity. Plays a role in glucocorticoid-mediated down-regulation of the early phase of the inflammatory response. Contributes to the adaptive immune response by enhancing signaling cascades that are triggered by T-cell activation, regulates differentiation and proliferation of activated T-cells. Promotes the differentiation of T-cells into Th1 cells and negatively regulates differentiation into Th2 cells. Has no effect on unstimulated T-cells. Negatively regulates hormone exocytosis via activation of the formyl peptide receptors and reorganization of the actin cytoskeleton. Has high affinity for Ca(2+) and can bind up to eight Ca(2+) ions. Displays Ca(2+)-dependent binding to phospholipid membranes. Plays a role in the formation of phagocytic cups and phagosomes. Plays a role in phagocytosis by mediating the Ca(2+)-dependent interaction between phagosomes and the actin cytoskeleton. Its function is as follows. Functions at least in part by activating the formyl peptide receptors and downstream signaling cascades. Promotes chemotaxis of granulocytes and monocytes via activation of the formyl peptide receptors. Promotes rearrangement of the actin cytoskeleton, cell polarization and cell migration. Promotes resolution of inflammation and wound healing. Acts via neutrophil N-formyl peptide receptors to enhance the release of CXCL2. This is Annexin A1 (ANXA1) from Bos taurus (Bovine).